Here is a 69-residue protein sequence, read N- to C-terminus: Small ribosomal subunit protein bS21 (69 aa).

The protein belongs to the bacterial ribosomal protein bS21 family.

This chain is Small ribosomal subunit protein bS21, found in Borrelia duttonii (strain Ly).